A 171-amino-acid chain; its full sequence is uncharacterized protein (171 aa).

Helical transmembrane passes span 13-35 (VGASLKVPAIAAGAAFFLSIATA) and 50-72 (ATVLALGAGVTAYALRALLAYVV).

The protein localises to the cell membrane. This is an uncharacterized protein from Treponema pallidum (strain Nichols).